We begin with the raw amino-acid sequence, 117 residues long: Antimicrobial peptide AmAMP1 (117 aa).

The first 25 residues, 1–25, serve as a signal peptide directing secretion; sequence MPSIRVLFVLLAVILLFMEVKMTSA. A propeptide spanning residues 26-73 is cleaved from the precursor; it reads ASIVKDVDEDETLENEDGEAMENSWPWHGVEDTSDYSDLSDLANSEKR. Cystine bridges form between Cys76–Cys115, Cys85–Cys108, and Cys94–Cys112.

Belongs to the coral AMP family.

It localises to the secreted. Its function is as follows. Coral peptide that probably acts as an antimicrobial peptide in the surface mucous layer of planula larvae and likely also in adults. Shows moderate to high activity against some Gram-negative and Gram-positive bacteria (tested on E.coli, B.megaterium, S.aureus, E.aesturaii, B.algicola, Acinetobacter spec.). Does not show antibacterial activity against the coral pathogen V.coralliilyticus. This is Antimicrobial peptide AmAMP1 from Acropora millepora (Staghorn coral).